Here is a 543-residue protein sequence, read N- to C-terminus: Protein P78/83 (543 aa).

Disordered regions lie at residues 147-222, 235-325, and 373-400; these read QALP…QPAA, RNEK…SLSN, and MAKS…ANTP. Residues 182-221 show a composition bias toward pro residues; sequence AAPPPPPSPVPNIPAPPPPPPPSMSELPPAPPMPTEPQPA. In terms of domain architecture, WH2 spans 226-246; it reads DRQQLLEAIRNEKNRTRLRPV. Over residues 271–321 the composition is skewed to pro residues; that stretch reads PKPPSASPPPPPPPPPPPAPPAPPPMVDLSSAPPPPPLVDLPSEMLPPPAP. Positions 375-384 are enriched in polar residues; sequence KSSSEATSND.

In terms of assembly, forms a complex with proteins C42 and E27. Interacts with host actin-related protein 2/3 complex. Interacts with protein Ac102.

The protein localises to the host cytoplasm. The protein resides in the host nucleus. Functionally, plays a role in the transport of the nucleocapsids from the cytoplasm toward the host nucleus together with the host actin-polymerizing Arp2/3 complex. This Lepidoptera (butterflies and moths) protein is Protein P78/83 (P61).